Here is a 158-residue protein sequence, read N- to C-terminus: Male-specific protein scotti (158 aa).

Residues Asn24 to Ala43 form a disordered region. The segment covering Gly30–Asp42 has biased composition (acidic residues).

The protein belongs to the male-specific scotti family.

Post-meiotically transcribed gene that has a role in late spermiogenesis; required for actin cone progression during spermatid individualization. This Drosophila virilis (Fruit fly) protein is Male-specific protein scotti.